The sequence spans 329 residues: Serpentine receptor class alpha-2 (329 aa).

The next 7 membrane-spanning stretches (helical) occupy residues 25–45 (FVYL…VKIL), 57–77 (ILLV…GIEA), 104–124 (YYKI…GLLI), 144–164 (CAVI…LIVW), 188–208 (HYFT…TFIL), 240–260 (FLTV…IVLV), and 273–293 (LLVV…VILV).

This sequence belongs to the nematode receptor-like protein sra family.

It is found in the membrane. The chain is Serpentine receptor class alpha-2 (sra-2) from Caenorhabditis elegans.